The chain runs to 405 residues: Farnesyl pyrophosphate synthase (405 aa).

Mg(2+)-binding residues include aspartate 158 and aspartate 162. A DDXXD motif motif is present at residues 158 to 162 (DDLAD).

Belongs to the FPP/GGPP synthase family. Mg(2+) is required as a cofactor.

It carries out the reaction isopentenyl diphosphate + (2E)-geranyl diphosphate = (2E,6E)-farnesyl diphosphate + diphosphate. The protein operates within pheromone biosynthesis. In terms of biological role, farnesyl pyrophosphate synthase involved in murgantiol biosynthesis, a male-released aggregation pheromone, by catalyzing the formation of (2E,6E)-farnesyl diphosphate. The sequence is that of Farnesyl pyrophosphate synthase from Murgantia histrionica (Harlequin bug).